A 362-amino-acid polypeptide reads, in one-letter code: HMG box-containing protein C19G7.04 (362 aa).

The SprT-like domain maps to 135–299 (KCFLARLEDE…RLCKSQIKQI (165 aa)). The HMG box DNA-binding region spans 306–348 (PNAFQIFLKENSKRLRKLHPHITHKELMKKLSDEYHRTKDAKQ).

The protein resides in the nucleus. Its subcellular location is the cytoplasm. It localises to the cytoskeleton. The protein localises to the spindle. The chain is HMG box-containing protein C19G7.04 from Schizosaccharomyces pombe (strain 972 / ATCC 24843) (Fission yeast).